Here is a 214-residue protein sequence, read N- to C-terminus: Small ribosomal subunit protein eS6 (214 aa).

It belongs to the eukaryotic ribosomal protein eS6 family.

This is Small ribosomal subunit protein eS6 from Saccharolobus islandicus (strain L.S.2.15 / Lassen #1) (Sulfolobus islandicus).